The following is a 90-amino-acid chain: Molybdopterin synthase sulfur carrier subunit (90 aa).

G90 carries the post-translational modification 1-thioglycine; alternate. G90 carries the post-translational modification Glycyl adenylate; alternate.

This sequence belongs to the MoaD family. MOCS2A subfamily. Heterotetramer; composed of 2 small (Mocs2A) and 2 large (Mocs2B) subunits. C-terminal thiocarboxylation occurs in 2 steps, it is first acyl-adenylated (-COAMP) via the hesA/moeB/thiF part of MOCS3, then thiocarboxylated (-COSH) via the rhodanese domain of MOCS3.

Its subcellular location is the cytoplasm. It functions in the pathway cofactor biosynthesis; molybdopterin biosynthesis. Acts as a sulfur carrier required for molybdopterin biosynthesis. Component of the molybdopterin synthase complex that catalyzes the conversion of precursor Z into molybdopterin by mediating the incorporation of 2 sulfur atoms into precursor Z to generate a dithiolene group. In the complex, serves as sulfur donor by being thiocarboxylated (-COSH) at its C-terminus by MOCS3. After interaction with Mocs2B, the sulfur is then transferred to precursor Z to form molybdopterin. This chain is Molybdopterin synthase sulfur carrier subunit, found in Drosophila yakuba (Fruit fly).